Consider the following 610-residue polypeptide: UvrABC system protein C (610 aa).

The region spanning 12–91 (TSPGVYLYKN…IKQKKPRFNI (80 aa)) is the GIY-YIG domain. A UVR domain is found at 202-237 (SDLKQSLTARMNKAAEGMQFELAAKYRDLITTVEDL).

This sequence belongs to the UvrC family. As to quaternary structure, interacts with UvrB in an incision complex.

The protein resides in the cytoplasm. The UvrABC repair system catalyzes the recognition and processing of DNA lesions. UvrC both incises the 5' and 3' sides of the lesion. The N-terminal half is responsible for the 3' incision and the C-terminal half is responsible for the 5' incision. The chain is UvrABC system protein C from Koribacter versatilis (strain Ellin345).